The sequence spans 269 residues: Bidirectional sugar transporter SWEET1a (269 aa).

Residues 1 to 6 (MEHIAR) are Extracellular-facing. The helical transmembrane segment at 7–27 (FFFGVSGNVIALFLFLSPVVT) threads the bilayer. One can recognise a MtN3/slv 1 domain in the interval 8-96 (FFGVSGNVIA…IFLIFAVDRR (89 aa)). Over 28–42 (FWRIIRKRSTEDFSG) the chain is Cytoplasmic. Residues 43-63 (VPYNMTLLNCLLSAWYGLPFV) traverse the membrane as a helical segment. The Extracellular portion of the chain corresponds to 64–72 (SPNNILVST). The chain crosses the membrane as a helical span at residues 73-93 (INGTGSVIEAIYVVIFLIFAV). Topologically, residues 94–100 (DRRARLR) are cytoplasmic. A helical transmembrane segment spans residues 101–121 (MLGLLSIVVSIFATVVLVSLL). Residues 122 to 129 (ALHGNARK) lie on the Extracellular side of the membrane. The helical transmembrane segment at 130 to 150 (VFCGLAATIFSICMYASPLSI) threads the bilayer. The 84-residue stretch at 132–215 (CGLAATIFSI…ILYFIYRKNK (84 aa)) folds into the MtN3/slv 2 domain. Residues 151-164 (MRLVIKTKSVEYMP) are Cytoplasmic-facing. The chain crosses the membrane as a helical span at residues 165–185 (FLLSLAVFLCGTSWFIYGLLG). Residues 186–189 (RDPF) lie on the Extracellular side of the membrane. Residues 190–210 (IIIPNGCGSFLGLVQLILYFI) form a helical membrane-spanning segment. Over 211 to 269 (YRKNKGPAVPAGKGEAAAAADVEDAKKVAAAVEMADATTTNKAAADTVVGDGKVVASQV) the chain is Cytoplasmic.

It belongs to the SWEET sugar transporter family. As to quaternary structure, forms homooligomers and/or heterooligomers.

The protein resides in the cell membrane. Its function is as follows. Mediates both low-affinity uptake and efflux of sugar across the plasma membrane. In Sorghum bicolor (Sorghum), this protein is Bidirectional sugar transporter SWEET1a.